Consider the following 132-residue polypeptide: Large ribosomal subunit protein uL24 (132 aa).

It belongs to the universal ribosomal protein uL24 family. As to quaternary structure, part of the 50S ribosomal subunit.

In terms of biological role, one of two assembly initiator proteins, it binds directly to the 5'-end of the 23S rRNA, where it nucleates assembly of the 50S subunit. Located at the polypeptide exit tunnel on the outside of the subunit. This chain is Large ribosomal subunit protein uL24, found in Aeropyrum pernix (strain ATCC 700893 / DSM 11879 / JCM 9820 / NBRC 100138 / K1).